A 309-amino-acid polypeptide reads, in one-letter code: D-alanine--D-alanine ligase (309 aa).

The 196-residue stretch at 110–305 folds into the ATP-grasp domain; it reads KLCWTGAGLP…FQELVWHILE (196 aa). 136-191 lines the ATP pocket; sequence RQALGFPVIVKPAEEGSSIGMSRAATAEELAQAWERASGYGCAVFAERWIDGVEYT. The Mg(2+) site is built by Asp-259, Glu-272, and Asn-274.

It belongs to the D-alanine--D-alanine ligase family. The cofactor is Mg(2+). Requires Mn(2+) as cofactor.

It is found in the cytoplasm. It catalyses the reaction 2 D-alanine + ATP = D-alanyl-D-alanine + ADP + phosphate + H(+). The protein operates within cell wall biogenesis; peptidoglycan biosynthesis. Its function is as follows. Cell wall formation. This chain is D-alanine--D-alanine ligase, found in Methylococcus capsulatus (strain ATCC 33009 / NCIMB 11132 / Bath).